The sequence spans 240 residues: GATA transcription factor 4 (240 aa).

Residues Ile104–Gly124 are disordered. The Nuclear localization signal signature appears at Lys109–Arg116. Residues Ala154–Leu208 form a GATA-type zinc finger.

This sequence belongs to the type IV zinc-finger family. Class A subfamily. In terms of tissue distribution, expressed in roots, flowers and leaves, and to a lower extent in stems.

The protein resides in the nucleus. Transcriptional activator that specifically binds 5'-GATA-3' or 5'-GAT-3' motifs within gene promoters. May be involved in the regulation of some light-responsive genes. This is GATA transcription factor 4 (GATA4) from Arabidopsis thaliana (Mouse-ear cress).